A 932-amino-acid polypeptide reads, in one-letter code: MDYNKTLNLPRTDFPMKANLPTREPEILKRWEEMDIYHKTLEKNKGKEKYILHDGPPYANGDIHIGTAMNKVLKDIIVKYKTMRGYDAPYVPGWDTHGLPIEQQAIKTLGIKRHEVSPTEFRKVCRDFAFSQIEKQKAQFKRLGVRGDWDNPYLTLNPEYEAKQIEVFGEMAKKGYIYKGLKPVYWCPSCETALAEAEIEYFDETSDSIYVKFRVKDDLGKFKGIVENLNNVYFVIWTTTTWTIPANLAIALNPEFDYALAKFGDEVYIMAKDMLDTVKKEANLSDYEIVAVFKGKDLEGMKATHPLYDRDSLIILGEHVTLEAGTGCVHTAPGHGEEDFLVGQEYGLEVLNPIDDKGYFTDKAPGYAGLYYEEANKVIKEDLKKANALVAETRITHSYPHCWRCKSPIIFRATEQWFASVEGFREEALKAIKEVNWYPSWGEERITNMVRDRRDWCISRQRVWGVPIPIFYCEKCGKPLINDDTINAVKKIFRQKGSDAWFEMSAEEILPKGITCECGSTKFRKETDIMDVWFDSGSSHAAVLQTHPDLKWPAELYLEGSDQHRGWFQSSLLTSVATRGKAPYRNVLTHGFVVDGEGRKMSKSLGNGIDPADVIKEYGADILRLWTVSADFTSDMRISQEILKQMTEAYRKIRNTSKFLLSNLYDFDPDKDMLPYEELLEIDKWALFRLNRVVEELTEAFDKYEYYDFLHLVHTFCVVDMSSLYLDILKDRLYTYPATSKERRAAQTTLYIILDTLVRLIAPVLTFTSEEIWSYMKHDSQNNFESVQLADWPQVQEKYNNPYIIEKWEKLFDIRKDISKALEIARTDKKIGHSLEAQVDIYPSQELYDFFKGFNDLEYVFIVSKVVLHQPEEPAPQNAYESDDYNLKIVVTHAPGEKCERCWMYSETVGTIKEHPTICARCASHIEQQTQV.

Positions 57–67 match the 'HIGH' region motif; that stretch reads PYANGDIHIGT. Glutamate 559 is a binding site for L-isoleucyl-5'-AMP. The 'KMSKS' region motif lies at 600–604; sequence KMSKS. An ATP-binding site is contributed by lysine 603. Zn(2+) contacts are provided by cysteine 899, cysteine 902, cysteine 919, and cysteine 922.

It belongs to the class-I aminoacyl-tRNA synthetase family. IleS type 1 subfamily. As to quaternary structure, monomer. Requires Zn(2+) as cofactor.

It is found in the cytoplasm. It carries out the reaction tRNA(Ile) + L-isoleucine + ATP = L-isoleucyl-tRNA(Ile) + AMP + diphosphate. Its function is as follows. Catalyzes the attachment of isoleucine to tRNA(Ile). As IleRS can inadvertently accommodate and process structurally similar amino acids such as valine, to avoid such errors it has two additional distinct tRNA(Ile)-dependent editing activities. One activity is designated as 'pretransfer' editing and involves the hydrolysis of activated Val-AMP. The other activity is designated 'posttransfer' editing and involves deacylation of mischarged Val-tRNA(Ile). This chain is Isoleucine--tRNA ligase, found in Thermoanaerobacter pseudethanolicus (strain ATCC 33223 / 39E) (Clostridium thermohydrosulfuricum).